Reading from the N-terminus, the 273-residue chain is MLVYLLPGSFDTREAHLDLLWEAGATGLEERGPNIRVYFDERTELPAEVADGEWHEEAEQDWQAEFKKNLRPVHAGRVTIVAPWQREEVPAGQLALVIEPGMAFGTGHHATTRMAVEALGELDLSGKRVLDVGTGSGVLAMAAAKLGAAQTLGVDIDPITIPIARDNARDNGLTSGIRFEEGTLGLDEDAEMFGEPYDVLVANLYAELHDLLAGEYAAQLRPGAPLILTGILTSKLPLVRDALDREGFTDVQVRTDSEGAGGEWALVTARRED.

4 residues coordinate S-adenosyl-L-methionine: T112, G133, D155, and N203.

The protein belongs to the methyltransferase superfamily. PrmA family.

The protein localises to the cytoplasm. It catalyses the reaction L-lysyl-[protein] + 3 S-adenosyl-L-methionine = N(6),N(6),N(6)-trimethyl-L-lysyl-[protein] + 3 S-adenosyl-L-homocysteine + 3 H(+). In terms of biological role, methylates ribosomal protein L11. In Deinococcus radiodurans (strain ATCC 13939 / DSM 20539 / JCM 16871 / CCUG 27074 / LMG 4051 / NBRC 15346 / NCIMB 9279 / VKM B-1422 / R1), this protein is Ribosomal protein L11 methyltransferase.